We begin with the raw amino-acid sequence, 282 residues long: uncharacterized protein (282 aa).

Residues 4 to 80 (STLTSKLESL…VDYLSDEKQY (77 aa)) form the HTH rpiR-type domain. A DNA-binding region (H-T-H motif) is located at residues 40 to 59 (VAELAQAAGVSSASVIRFTR). The SIS domain maps to 125-265 (IAQKIVEAKR…FFKYLTLTNE (141 aa)).

This is an uncharacterized protein from Providencia stuartii.